The primary structure comprises 238 residues: Aliphatic sulfonates import ATP-binding protein SsuB (238 aa).

The ABC transporter domain occupies 7-221; the sequence is VSLHQVHQQF…RPGDAAFASL (215 aa). Residue 39-46 coordinates ATP; it reads GRSGSGKT.

The protein belongs to the ABC transporter superfamily. Aliphatic sulfonates importer (TC 3.A.1.17.2) family. As to quaternary structure, the complex is composed of two ATP-binding proteins (SsuB), two transmembrane proteins (SsuC) and a solute-binding protein (SsuA).

The protein localises to the cell inner membrane. It carries out the reaction ATP + H2O + aliphatic sulfonate-[sulfonate-binding protein]Side 1 = ADP + phosphate + aliphatic sulfonateSide 2 + [sulfonate-binding protein]Side 1.. Its function is as follows. Part of the ABC transporter complex SsuABC involved in aliphatic sulfonates import. Responsible for energy coupling to the transport system. The polypeptide is Aliphatic sulfonates import ATP-binding protein SsuB (Granulibacter bethesdensis (strain ATCC BAA-1260 / CGDNIH1)).